The following is a 32-amino-acid chain: Ranatuerin-2Lb (32 aa).

Cys-27 and Cys-32 form a disulfide bridge.

As to expression, expressed by the skin glands.

Its subcellular location is the secreted. Its function is as follows. Antibacterial activity against Gram-positive bacterium S.aureus and Gram-negative bacterium E.coli. Has activity against C.albicans. This is Ranatuerin-2Lb from Rana luteiventris (Columbia spotted frog).